Here is a 1407-residue protein sequence, read N- to C-terminus: DNA-directed RNA polymerase subunit beta' (1407 aa).

Residues C70, C72, C85, and C88 each contribute to the Zn(2+) site. D460, D462, and D464 together coordinate Mg(2+). Positions 814, 888, 895, and 898 each coordinate Zn(2+).

This sequence belongs to the RNA polymerase beta' chain family. In terms of assembly, the RNAP catalytic core consists of 2 alpha, 1 beta, 1 beta' and 1 omega subunit. When a sigma factor is associated with the core the holoenzyme is formed, which can initiate transcription. It depends on Mg(2+) as a cofactor. The cofactor is Zn(2+).

It catalyses the reaction RNA(n) + a ribonucleoside 5'-triphosphate = RNA(n+1) + diphosphate. Functionally, DNA-dependent RNA polymerase catalyzes the transcription of DNA into RNA using the four ribonucleoside triphosphates as substrates. The chain is DNA-directed RNA polymerase subunit beta' from Cronobacter sakazakii (strain ATCC BAA-894) (Enterobacter sakazakii).